The following is a 124-amino-acid chain: Small ribosomal subunit protein uS12c (124 aa).

This sequence belongs to the universal ribosomal protein uS12 family. As to quaternary structure, part of the 30S ribosomal subunit.

The protein localises to the plastid. Functionally, with S4 and S5 plays an important role in translational accuracy. Located at the interface of the 30S and 50S subunits. The sequence is that of Small ribosomal subunit protein uS12c (rps12) from Helicosporidium sp. subsp. Simulium jonesii (Green alga).